The sequence spans 242 residues: uncharacterized protein (242 aa).

Residues G198, I218, and L227 each coordinate S-adenosyl-L-methionine.

It belongs to the class IV-like SAM-binding methyltransferase superfamily. RNA methyltransferase TrmH family.

This is an uncharacterized protein from Mycoplasma genitalium (strain ATCC 33530 / DSM 19775 / NCTC 10195 / G37) (Mycoplasmoides genitalium).